A 1608-amino-acid chain; its full sequence is Protein REDUCED CHLOROPLAST COVERAGE 3 (1608 aa).

A compositionally biased stretch (basic residues) spans 1 to 12; it reads MAPRSSKGKSNN. 2 disordered regions span residues 1 to 22 and 278 to 303; these read MAPR…KKKR and VSES…GRNG. In terms of domain architecture, Clu spans 288–564; the sequence is EDEHWGGNGG…KKETDVCGKP (277 aa). 4 TPR repeats span residues 848 to 881, 890 to 923, 932 to 965, and 974 to 1007; these read GRTL…MIAV, ACAY…NERE, MKSY…LHFT, and AATY…NKRL. 5 disordered regions span residues 1194 to 1226, 1238 to 1292, 1369 to 1400, 1466 to 1499, and 1531 to 1552; these read VEES…RQPD, HNRN…ASGA, KQES…KTSD, TPRS…VSVD, and PAAL…KDSA. The short motif at 1217–1224 is the Nuclear localization signal element; it reads GRKSRQRQ. Composition is skewed to polar residues over residues 1242 to 1265 and 1373 to 1385; these read QDVQ…LSKS and QESA…LTSE. Over residues 1535-1546 the composition is skewed to polar residues; the sequence is SKTSPEAESGGT.

The protein localises to the nucleus. The protein resides in the cytoplasm. It is found in the cytosol. May act as the scaffold of a protein complex, which sequesters key factors that are required for the G2 to M transition in meristematic tissues. Together with REC2, REC3 and FMT/CLU, contributes to the establishment of the cellular volume devoted to the chloroplast compartment. The chain is Protein REDUCED CHLOROPLAST COVERAGE 3 from Arabidopsis thaliana (Mouse-ear cress).